Consider the following 314-residue polypeptide: Basic endochitinase (314 aa).

A signal peptide spans 1-20 (MGLWALVAFCLLSLILVGSA). Positions 21–61 (EQCGGQAGGRVCPGGACCSKFGWCGNTADYCGSGCQSQCSS) constitute a Chitin-binding type-1 domain. Cystine bridges form between cysteine 23–cysteine 38, cysteine 32–cysteine 44, cysteine 37–cysteine 51, cysteine 55–cysteine 59, cysteine 86–cysteine 148, cysteine 160–cysteine 168, and cysteine 267–cysteine 299. The active-site Proton donor is glutamate 130.

The protein belongs to the glycosyl hydrolase 19 family. Chitinase class I subfamily.

The enzyme catalyses Random endo-hydrolysis of N-acetyl-beta-D-glucosaminide (1-&gt;4)-beta-linkages in chitin and chitodextrins.. In terms of biological role, defense against chitin-containing fungal pathogens. The chain is Basic endochitinase (CHIT1B) from Vitis vinifera (Grape).